The primary structure comprises 172 residues: Photosystem I assembly protein Ycf3 (172 aa).

TPR repeat units follow at residues 35–70 (AFTY…EIDP), 74–107 (SYIL…NPFL), and 122–155 (GERA…TPGN).

This sequence belongs to the Ycf3 family.

The protein localises to the plastid. It localises to the chloroplast thylakoid membrane. In terms of biological role, essential for the assembly of the photosystem I (PSI) complex. May act as a chaperone-like factor to guide the assembly of the PSI subunits. The protein is Photosystem I assembly protein Ycf3 of Dioscorea elephantipes (Elephant's foot yam).